The following is a 446-amino-acid chain: MLDMSEARSQPPCSPSGTASSMSHVEDSDSDAPPSPAGSEGLGRAGVAVGGARGDPAEAADERFPACIRDAVSQVLKGYDWSLVPMPVRGGGGGALKAKPHVKRPMNAFMVWAQAARRKLADQYPHLHNAELSKTLGKLWRLLSESEKRPFVEEAERLRVQHKKDHPDYKYQPRRRKSAKAGHSDSDSGAELGPHPGGGAVYKAEAGLGDGHHHGDHTGQTHGPPTPPTTPKTELQQAGAKPELKLEGRRPVDSGRQNIDFSNVDISELSSEVMGTMDAFDVHEFDQYLPLGGPAPPEPGQAYGGAYFHAGASPVWAHKSAPSASASPTETGPPRPHIKTEQPSPGHYGDQPRGSPDYGSCSGQSSATPAAPAGPFAGSQGDYGDLQASSYYGAYPGYAPGLYQYPCFHSPRRPYASPLLNGLALPPAHSPTSHWDQPVYTTLTRP.

3 disordered regions span residues 1 to 58, 155 to 259, and 318 to 378; these read MLDM…DPAE, AERL…RQNI, and HKSA…PFAG. The span at 40–53 shows a compositional bias: gly residues; that stretch reads EGLGRAGVAVGGAR. The dimerization (DIM) stretch occupies residues 58–100; it reads EAADERFPACIRDAVSQVLKGYDWSLVPMPVRGGGGGALKAKP. Positions 102 to 170 form a DNA-binding region, HMG box; it reads VKRPMNAFMV…QHKKDHPDYK (69 aa). 3 stretches are compositionally biased toward basic and acidic residues: residues 155–171, 210–219, and 242–253; these read AERLRVQHKKDHPDYKY, DGHHHGDHTG, and PELKLEGRRPVD. Residues 224 to 298 are transactivation domain (TAM); sequence PPTPPTTPKT…LPLGGPAPPE (75 aa). The segment at 335–446 is transactivation domain (TAC); it reads RPHIKTEQPS…QPVYTTLTRP (112 aa). Over residues 362-378 the composition is skewed to low complexity; it reads SGQSSATPAAPAGPFAG. The short motif at 400 to 408 is the 9aaTAD element; it reads PGLYQYPCF. A disordered region spans residues 425 to 446; sequence LPPAHSPTSHWDQPVYTTLTRP. A compositionally biased stretch (polar residues) spans 430 to 446; sequence SPTSHWDQPVYTTLTRP.

The protein resides in the nucleus. Its function is as follows. Transcription factor that may play a role in central nervous system, limb and facial development. May be involved in male sex determination. Binds the consensus motif 5'-[AT][AT]CAA[AT]G-3'. In Homo sapiens (Human), this protein is Transcription factor SOX-8.